A 1752-amino-acid polypeptide reads, in one-letter code: Chitin synthase E (1752 aa).

Residue glycine 1–threonine 8 coordinates ATP. The interval serine 492–aspartate 520 is disordered. The segment at leucine 558–aspartate 582 is actin-binding. The next 2 helical transmembrane spans lie at tryptophan 789 to glycine 809 and leucine 828 to valine 848. The 89-residue stretch at glutamine 852–serine 940 folds into the Cytochrome b5 heme-binding domain. Asparagine 938 and asparagine 963 each carry an N-linked (GlcNAc...) asparagine glycan. Residues phenylalanine 1099–leucine 1119 traverse the membrane as a helical segment. Asparagine 1322, asparagine 1356, and asparagine 1462 each carry an N-linked (GlcNAc...) asparagine glycan. The next 3 helical transmembrane spans lie at leucine 1494–valine 1514, isoleucine 1520–isoleucine 1540, and methionine 1547–serine 1567. An N-linked (GlcNAc...) asparagine glycan is attached at asparagine 1685. The 56-residue stretch at leucine 1689–proline 1744 folds into the DEK-C domain.

This sequence in the N-terminal section; belongs to the TRAFAC class myosin-kinesin ATPase superfamily. Myosin family. It in the C-terminal section; belongs to the chitin synthase family. Class V subfamily.

The protein resides in the cell membrane. Its subcellular location is the cell septum. The protein localises to the cell tip. The enzyme catalyses [(1-&gt;4)-N-acetyl-beta-D-glucosaminyl](n) + UDP-N-acetyl-alpha-D-glucosamine = [(1-&gt;4)-N-acetyl-beta-D-glucosaminyl](n+1) + UDP + H(+). Polymerizes chitin, a structural polymer of the cell wall and septum, by transferring the sugar moiety of UDP-GlcNAc to the non-reducing end of the growing chitin polymer. Important for hyphal growth and conidiophore development but not pathogenicity. The sequence is that of Chitin synthase E from Aspergillus fumigatus (Neosartorya fumigata).